Consider the following 515-residue polypeptide: Interferon-induced, double-stranded RNA-activated protein kinase (515 aa).

A2 bears the N-acetylalanine mark. In terms of domain architecture, DRBM 1 spans 8-76 (FYMDKLNKYR…AKLAVDILDN (69 aa)). A Glycyl lysine isopeptide (Lys-Gly) (interchain with G-Cter in ISG15) cross-link involves residue K68. A Phosphothreonine modification is found at T84. Positions 95–162 (NYIGLVNSFA…AKEAYQKLLK (68 aa)) constitute a DRBM 2 domain. Position 96 is a phosphotyrosine; by autocatalysis (Y96). K154 participates in a covalent cross-link: Glycyl lysine isopeptide (Lys-Gly) (interchain with G-Cter in ISG15). Y157 is modified (phosphotyrosine; by autocatalysis). The tract at residues 204–224 (ENVFTNGLGENKRKSGVKVSP) is disordered. At T233 the chain carries Phosphothreonine. Residues 241 to 515 (DFEDIEEIGL…ISEKKKRNTC (275 aa)) form an interaction with TRAF5 region. The Protein kinase domain maps to 242–504 (FEDIEEIGLG…EILKTLAEWR (263 aa)). Position 248–256 (248–256 (IGLGGFGQV)) interacts with ATP. Y268 bears the Phosphotyrosine; by autocatalysis mark. ATP is bound at residue K271. The Proton acceptor role is filled by D376. Residues T409 and T414 each carry the phosphothreonine; by autocatalysis modification. At S419 the chain carries Phosphoserine.

Belongs to the protein kinase superfamily. Ser/Thr protein kinase family. GCN2 subfamily. Homodimer. Interacts with DNAJC3 and STRBP. Forms a complex with FANCA, FANCC, FANCG and HSP70. Interacts with ADAR/ADAR1. The inactive form interacts with NCK1. Interacts (via the kinase catalytic domain) with STAT3 (via SH2 domain), TRAF2 (C-terminus), TRAF5 (C-terminus) and TRAF6 (C-terminus). Interacts with MAP2K6, TARBP2, NLRP1, NLRC4 and AIM2. Interacts (via DRBM 1 domain) with DUS2L (via DRBM domain). Interacts with DHX9 (via N-terminus) and this interaction is dependent upon activation of the kinase. The inactive form interacts with GSN. Interacts with IKBKB/IKKB, NPM1, NLRP3 and IRS1. Post-translationally, autophosphorylated on several Ser, Thr and Tyr residues. Autophosphorylation of Thr-414 is dependent on Thr-409 and is stimulated by dsRNA binding and dimerization. Autophosphorylation apparently leads to the activation of the kinase. Tyrosine autophosphorylation is essential for efficient dsRNA-binding, dimerization, and kinase activation. In terms of tissue distribution, expressed in heart, lung, brain, kidney, testes, thymus and bone marrow.

It localises to the cytoplasm. The protein localises to the nucleus. It is found in the perinuclear region. The catalysed reaction is L-seryl-[protein] + ATP = O-phospho-L-seryl-[protein] + ADP + H(+). It carries out the reaction L-threonyl-[protein] + ATP = O-phospho-L-threonyl-[protein] + ADP + H(+). It catalyses the reaction L-tyrosyl-[protein] + ATP = O-phospho-L-tyrosyl-[protein] + ADP + H(+). Its activity is regulated as follows. Initially produced in an inactive form and is activated by binding to viral dsRNA, which causes dimerization and autophosphorylation in the activation loop and stimulation of function. ISGylation can activate it in the absence of viral infection. Can also be activated by heparin, pro-inflammatory stimuli, growth factors, cytokines, oxidative stress and the cellular protein PRKRA. Activity is markedly stimulated by manganese ions. Activation is blocked by the cellular proteins TARBP2, DUS2L, NPM1, NCK1 and ADAR. IFN-induced dsRNA-dependent serine/threonine-protein kinase that phosphorylates the alpha subunit of eukaryotic translation initiation factor 2 (EIF2S1/eIF-2-alpha) and plays a key role in the innate immune response to viral infection. Inhibits viral replication via the integrated stress response (ISR): EIF2S1/eIF-2-alpha phosphorylation in response to viral infection converts EIF2S1/eIF-2-alpha in a global protein synthesis inhibitor, resulting to a shutdown of cellular and viral protein synthesis, while concomitantly initiating the preferential translation of ISR-specific mRNAs, such as the transcriptional activator ATF4. Exerts its antiviral activity on a wide range of DNA and RNA viruses including west nile virus (WNV), sindbis virus (SV), foot-and-mouth virus (FMDV), semliki Forest virus (SFV) and lymphocytic choriomeningitis virus (LCMV). Also involved in the regulation of signal transduction, apoptosis, cell proliferation and differentiation: phosphorylates other substrates including p53/TP53, PPP2R5A, DHX9, ILF3, and IRS1. In addition to serine/threonine-protein kinase activity, also has tyrosine-protein kinase activity and phosphorylates CDK1 at 'Tyr-4' upon DNA damage, facilitating its ubiquitination and proteasomal degradation. Either as an adapter protein and/or via its kinase activity, can regulate various signaling pathways (p38 MAP kinase, NF-kappa-B and insulin signaling pathways) and transcription factors (JUN, STAT1, STAT3, IRF1, ATF3) involved in the expression of genes encoding pro-inflammatory cytokines and IFNs. Activates the NF-kappa-B pathway via interaction with IKBKB and TRAF family of proteins and activates the p38 MAP kinase pathway via interaction with MAP2K6. Can act as both a positive and negative regulator of the insulin signaling pathway (ISP). Negatively regulates ISP by inducing the inhibitory phosphorylation of insulin receptor substrate 1 (IRS1) at 'Ser-312' and positively regulates ISP via phosphorylation of PPP2R5A which activates FOXO1, which in turn up-regulates the expression of insulin receptor substrate 2 (IRS2). Can regulate NLRP3 inflammasome assembly and the activation of NLRP3, NLRP1, AIM2 and NLRC4 inflammasomes. Plays a role in the regulation of the cytoskeleton by binding to gelsolin (GSN), sequestering the protein in an inactive conformation away from actin. This is Interferon-induced, double-stranded RNA-activated protein kinase (Eif2ak2) from Mus musculus (Mouse).